The chain runs to 591 residues: uncharacterized protein (591 aa).

An N-terminal signal peptide occupies residues 1-30; it reads MGKLLFGKLVFKKSLFLLSGMSSLAVFLTA. Cys31 carries N-palmitoyl cysteine lipidation. A lipid anchor (S-diacylglycerol cysteine) is attached at Cys31. Over residues 476-488 the composition is skewed to basic and acidic residues; the sequence is KKKLSEVATKKNE. 2 disordered regions span residues 476-497 and 510-535; these read KKKL…NGSN and SSSS…DNDG. Positions 510 to 523 are enriched in low complexity; the sequence is SSSSTSMRNGSSDS.

This sequence to T.pallidum TmpC.

Its subcellular location is the cell membrane. This is an uncharacterized protein from Mycoplasma genitalium (strain ATCC 33530 / DSM 19775 / NCTC 10195 / G37) (Mycoplasmoides genitalium).